The chain runs to 780 residues: Heat shock protein 90-5, chloroplastic (780 aa).

Residues 1–60 (MAPALSRSLYTSPLTSVPITPVSSRLSHLRSSFLPHGGALRTGVSCSWNLEKRCNRFAVK) constitute a chloroplast transit peptide. Residues E106, N110, D152, M157, 172–173 (SG), 196–201 (QFGVGF), T251, and R441 contribute to the ATP site. Residues 742 to 780 (GRVEEEEESSTVNEGDDKSGETEVVEPSEVRAESDPWQD) form a disordered region. Residues 769–780 (SEVRAESDPWQD) show a composition bias toward basic and acidic residues.

The protein belongs to the heat shock protein 90 family. In terms of assembly, homodimer. Interacts with VIPP1. Interacts with P23-1. In terms of tissue distribution, expressed in roots, cotyledons, young leaves, mature leaves, stems, flowers, petals and siliques.

The protein resides in the plastid. The protein localises to the chloroplast stroma. In terms of biological role, molecular chaperone required for chloroplast biogenesis. Essential for chloroplast biogenesis and maintenance, and thus for embryogenesis. May be involved in the disassembly of VIPP1 for thylakoid membrane formation and/or maintenance. Cooperates with TIC components and other molecular chaperones to drive transport of preproteins into chloroplasts and functions in the chloroplast stroma to facilitate membrane translocation during protein import into the organelle. This chain is Heat shock protein 90-5, chloroplastic, found in Arabidopsis thaliana (Mouse-ear cress).